The chain runs to 346 residues: Phosphoribosylformylglycinamidine cyclo-ligase (346 aa).

This sequence belongs to the AIR synthase family.

It localises to the cytoplasm. The catalysed reaction is 2-formamido-N(1)-(5-O-phospho-beta-D-ribosyl)acetamidine + ATP = 5-amino-1-(5-phospho-beta-D-ribosyl)imidazole + ADP + phosphate + H(+). It functions in the pathway purine metabolism; IMP biosynthesis via de novo pathway; 5-amino-1-(5-phospho-D-ribosyl)imidazole from N(2)-formyl-N(1)-(5-phospho-D-ribosyl)glycinamide: step 2/2. This chain is Phosphoribosylformylglycinamidine cyclo-ligase, found in Bacillus pumilus (strain SAFR-032).